A 293-amino-acid polypeptide reads, in one-letter code: Kallikrein-5 (293 aa).

The signal sequence occupies residues methionine 1–glycine 22. The segment covering histidine 37–aspartate 49 has biased composition (polar residues). A disordered region spans residues histidine 37 to isoleucine 68. The Peptidase S1 domain occupies isoleucine 67–glutamine 290. Asparagine 69 carries an N-linked (GlcNAc...) asparagine glycan. 6 cysteine pairs are disulfide-bonded: cysteine 73-cysteine 206, cysteine 93-cysteine 109, cysteine 178-cysteine 279, cysteine 185-cysteine 251, cysteine 217-cysteine 231, and cysteine 241-cysteine 266. Catalysis depends on charge relay system residues histidine 108 and aspartate 153. N-linked (GlcNAc...) asparagine glycosylation is found at asparagine 173 and asparagine 208. Serine 245 (charge relay system) is an active-site residue. The N-linked (GlcNAc...) asparagine glycan is linked to asparagine 252.

This sequence belongs to the peptidase S1 family. Kallikrein subfamily. Interacts with SPINK9. Expressed in skin, breast, brain and testis. Expressed at the stratum granulosum of palmar skin.

It is found in the secreted. With respect to regulation, inhibited by Zn2+. Functionally, may be involved in desquamation. The chain is Kallikrein-5 from Homo sapiens (Human).